Consider the following 549-residue polypeptide: Fumarate hydratase 1, mitochondrial (549 aa).

[4Fe-4S] cluster is bound at residue Cys114. Residues 115–116 (QD), Arg154, Gly197, and 200–206 (NKSFLLQ) each bind (S)-malate. Residues Cys233 and Cys328 each contribute to the [4Fe-4S] cluster site. Residues Arg404, 450–454 (TTAGR), and Lys474 contribute to the (S)-malate site.

This sequence belongs to the class-I fumarase family. As to quaternary structure, homodimer. [4Fe-4S] cluster is required as a cofactor.

The protein resides in the mitochondrion. The catalysed reaction is (S)-malate = fumarate + H2O. Its pathway is carbohydrate metabolism; tricarboxylic acid cycle; (S)-malate from fumarate: step 1/1. Specifically and competitively inhibited by 2-thiomalate, which coordinates with the catalytic [4Fe-4S] cluster. Catalyzes the reversible hydration of fumarate to (S)-malate. Catalyzes the hydration of fumarate to L-malate in the tricarboxylic acid (TCA) cycle to facilitate a transition step in the production of energy in the form of NADH. This chain is Fumarate hydratase 1, mitochondrial, found in Leishmania major.